Consider the following 504-residue polypeptide: Maturase K (504 aa).

This sequence belongs to the intron maturase 2 family. MatK subfamily.

Its subcellular location is the plastid. It localises to the chloroplast. Functionally, usually encoded in the trnK tRNA gene intron. Probably assists in splicing its own and other chloroplast group II introns. In Gossypium gossypioides (Mexican cotton), this protein is Maturase K.